The sequence spans 315 residues: Voltage-dependent calcium channel gamma-3 subunit (315 aa).

The next 4 membrane-spanning stretches (helical) occupy residues 8-28, 104-124, 135-155, and 181-201; these read IQMLITTVGAFAAFSLMTIAV, SSVFPILSVTLLFFGGLCVAA, ILSAGIFFVSAGLSNIIGIIV, and FGAFSFIIAEIVGVVAVHIYI. Ser248 bears the Phosphoserine mark.

Belongs to the PMP-22/EMP/MP20 family. CACNG subfamily. In terms of assembly, the L-type calcium channel is composed of five subunits: alpha-1, alpha-2/delta, beta and gamma. Acts as an auxiliary subunit for AMPA-selective glutamate receptors (AMPARs). Found in a complex with GRIA1, GRIA2, GRIA3, GRIA4, CNIH2, CNIH3, CACNG2, CACNG4, CACNG5, CACNG7 and CACNG8. Interacts with AP4M1 and GRIA1; associates GRIA1 with the adaptor protein complex 4 (AP-4) to target GRIA1 to the somatodendritic compartment of neurons.

Its subcellular location is the membrane. Regulates the trafficking to the somatodendritic compartment and gating properties of AMPA-selective glutamate receptors (AMPARs). Promotes their targeting to the cell membrane and synapses and modulates their gating properties by slowing their rates of activation, deactivation and desensitization. Does not show subunit-specific AMPA receptor regulation and regulates all AMPAR subunits. Thought to stabilize the calcium channel in an inactivated (closed) state. This Homo sapiens (Human) protein is Voltage-dependent calcium channel gamma-3 subunit (CACNG3).